The primary structure comprises 389 residues: 23S rRNA (uracil(747)-C(5))-methyltransferase RlmC (389 aa).

[4Fe-4S] cluster-binding residues include Cys5, Cys13, Cys16, and Cys94. 4 residues coordinate S-adenosyl-L-methionine: Gln219, Phe248, Glu275, and Asn321. Cys348 acts as the Nucleophile in catalysis.

This sequence belongs to the class I-like SAM-binding methyltransferase superfamily. RNA M5U methyltransferase family. RlmC subfamily.

The enzyme catalyses uridine(747) in 23S rRNA + S-adenosyl-L-methionine = 5-methyluridine(747) in 23S rRNA + S-adenosyl-L-homocysteine + H(+). Catalyzes the formation of 5-methyl-uridine at position 747 (m5U747) in 23S rRNA. This chain is 23S rRNA (uracil(747)-C(5))-methyltransferase RlmC, found in Mannheimia succiniciproducens (strain KCTC 0769BP / MBEL55E).